The chain runs to 764 residues: Protein translocase subunit SecA 2 (764 aa).

ATP is bound by residues Q83, 101-105 (GEGKT), and D490.

This sequence belongs to the SecA family. In terms of assembly, monomer and homodimer. Part of the essential Sec protein translocation apparatus which comprises SecA, SecYEG and auxiliary proteins SecDF. Other proteins may also be involved.

The protein localises to the cell membrane. The protein resides in the cytoplasm. The enzyme catalyses ATP + H2O + cellular proteinSide 1 = ADP + phosphate + cellular proteinSide 2.. Its function is as follows. Part of the Sec protein translocase complex. Interacts with the SecYEG preprotein conducting channel. Has a central role in coupling the hydrolysis of ATP to the transfer of proteins into and across the cell membrane, serving as an ATP-driven molecular motor driving the stepwise translocation of polypeptide chains across the membrane. This Corynebacterium diphtheriae (strain ATCC 700971 / NCTC 13129 / Biotype gravis) protein is Protein translocase subunit SecA 2.